The sequence spans 175 residues: B9 domain-containing protein 2 (175 aa).

The region spanning 2-118 (AEVHVIGQIM…DCPTWRPLGS (117 aa)) is the C2 B9-type domain.

The protein belongs to the B9D family. Part of the tectonic-like complex (also named B9 complex). Interacts with TUBG1.

The protein resides in the cytoplasm. The protein localises to the cytoskeleton. Its subcellular location is the cilium basal body. It is found in the cilium axoneme. It localises to the nucleus. In terms of biological role, component of the tectonic-like complex, a complex localized at the transition zone of primary cilia and acting as a barrier that prevents diffusion of transmembrane proteins between the cilia and plasma membranes. The sequence is that of B9 domain-containing protein 2 (B9D2) from Bos taurus (Bovine).